The chain runs to 519 residues: Ubiquitin carboxyl-terminal hydrolase 30 (519 aa).

Residues 1–52 (MSWAPVSTWSRRTPLAACCSAPELPPAGAWKACAAGSLRIGPQGRCKMMKNW) are Mitochondrial intermembrane-facing. Residues 53–73 (GMIGGIAAALAAGIYVLWGPI) traverse the membrane as a helical segment. Topologically, residues 74–519 (SDRKKYRKGL…HPEDQRAAEK (446 aa)) are cytoplasmic. In terms of domain architecture, USP spans 85-504 (PGLLNLGNTC…SAYLLFYERI (420 aa)). The active-site Nucleophile is Cys94. The tract at residues 379–405 (SKQPANHLSAAEQETTDGKEGGAQNPT) is disordered. Residue His455 is the Proton acceptor of the active site.

Belongs to the peptidase C19 family.

Its subcellular location is the mitochondrion outer membrane. It catalyses the reaction Thiol-dependent hydrolysis of ester, thioester, amide, peptide and isopeptide bonds formed by the C-terminal Gly of ubiquitin (a 76-residue protein attached to proteins as an intracellular targeting signal).. Deubiquitinating enzyme that acts as a key inhibitor of mitophagy by counteracting the action of parkin (PRKN). The protein is Ubiquitin carboxyl-terminal hydrolase 30 (usp30) of Xenopus tropicalis (Western clawed frog).